A 307-amino-acid chain; its full sequence is Dioxygenase swnH1 (307 aa).

Residues histidine 149, aspartate 151, and histidine 227 each contribute to the Fe cation site.

The protein belongs to the PhyH family. In terms of assembly, homodimer. The cofactor is Fe cation.

It functions in the pathway mycotoxin biosynthesis. Dioxygenase; part of the gene cluster that mediates the biosynthesis of swainsonine (SW), a cytotoxic fungal alkaloid and a potential cancer therapy drug. Swainsonine production occurs via a multibranched pathway and is dispensable for fungal colonization of plants and infection of insect hosts. The first step of swainsonine biosynthesis is the production of the precursor pipecolic acid (PA) via conversion of L-lysine (Lys) to 1-piperideine-6-carboxylate (P6C) by the aminotransferase swnA, the latter being further reduced to PA by the reductase swnR. The PKS-NRPS hybrid synthetase swnK uptakes and condensates PA and malonyl-CoA with and without skipping of the ketoreductase (KR) domain in order to produce 3 intermediates, 1-oxoindolizidine, (1S)-1-hydroxyindolizin, and (1R)-1-hydroxyindolizine; with the transisomer (1S)-1-hydroxyindolizin being predominant. The terminal thioester reductase (TE) domain of swnK is involved in reduction of the thioester bond to release the intermediate aldehydes. The oxidoreductase swnN could contribute to the reduction of 1-oxoindolizidine to (1S)-1-hydroxyindolizin and (1R)-1-hydroxyindolizine, contributing to the major route of SW production. The dioxygenase swnH2 would be responsible for the oxidization of (1R)-1-hydroxyindolizine into (1R,2S)-1,2-dihydroxyindolizine and of (1S)-1-hydroxyindolizin to yield both (1R,2S)-1,2-dihydroxyindolizine and (1S,2S)-1,2-dihydroxyindolizine. The dioxygenase swnH1 then performs the conversion of the 1,2-dihydroxyindolizine epimers to SW. The polypeptide is Dioxygenase swnH1 (Arthroderma benhamiae (strain ATCC MYA-4681 / CBS 112371) (Trichophyton mentagrophytes)).